The chain runs to 750 residues: Ribosomal RNA large subunit methyltransferase K/L (750 aa).

Positions 46 to 157 (TAYRLCLWSR…RGEAILSLDL (112 aa)) constitute a THUMP domain.

Belongs to the methyltransferase superfamily. RlmKL family.

The protein localises to the cytoplasm. The enzyme catalyses guanosine(2445) in 23S rRNA + S-adenosyl-L-methionine = N(2)-methylguanosine(2445) in 23S rRNA + S-adenosyl-L-homocysteine + H(+). It catalyses the reaction guanosine(2069) in 23S rRNA + S-adenosyl-L-methionine = N(2)-methylguanosine(2069) in 23S rRNA + S-adenosyl-L-homocysteine + H(+). Functionally, specifically methylates the guanine in position 2445 (m2G2445) and the guanine in position 2069 (m7G2069) of 23S rRNA. The protein is Ribosomal RNA large subunit methyltransferase K/L of Pseudomonas syringae pv. syringae (strain B728a).